A 154-amino-acid chain; its full sequence is 17 kDa surface antigen (154 aa).

An N-terminal signal peptide occupies residues Met-1–Ala-19. The N-palmitoyl cysteine moiety is linked to residue Cys-20. Cys-20 carries S-diacylglycerol cysteine lipidation.

It belongs to the rickettsiale 17 kDa surface antigen family.

The protein localises to the cell outer membrane. The sequence is that of 17 kDa surface antigen (omp) from Rickettsia montanensis.